The chain runs to 123 residues: Amoebiasin-2 (123 aa).

The N-terminal stretch at 1–16 (MKQFIFFALLCTSTYA) is a signal peptide. Positions 45-50 (NPSTGY) match the BC loop motif. The DE loop motif lies at 71 to 81 (EPHPSGMVGFP). Residues 105–114 (PWEKGKEPLR) carry the FG loop motif.

The protein belongs to the protease inhibitor I42 family. Monomer. May form homodimer. Interacts with cysteine protease CP2. Interacts with cysteine protease CP5.

The protein localises to the cytoplasmic vesicle. Its subcellular location is the lysosome. The protein resides in the phagosome. Functionally, cysteine protease inhibitor. Inhibits cysteine proteases CP1, CP2 and to a lesser extent CP5. This is Amoebiasin-2 from Entamoeba histolytica (strain ATCC 30459 / HM-1:IMSS / ABRM).